We begin with the raw amino-acid sequence, 224 residues long: Cytidylate kinase (224 aa).

Residue 11–19 (GPAAAGKST) participates in ATP binding.

This sequence belongs to the cytidylate kinase family. Type 1 subfamily.

It is found in the cytoplasm. It catalyses the reaction CMP + ATP = CDP + ADP. It carries out the reaction dCMP + ATP = dCDP + ADP. The chain is Cytidylate kinase from Listeria monocytogenes serovar 1/2a (strain ATCC BAA-679 / EGD-e).